Reading from the N-terminus, the 360-residue chain is G-protein coupled receptor 15 (360 aa).

The Extracellular segment spans residues 1–33 (MDPEETSVYLDYYYATSPNSDIRETHSHVPYTS). The chain crosses the membrane as a helical span at residues 34-54 (VFLPVFYTAVFLTGVLGNLVL). Topologically, residues 55-69 (MGALHFKPGSRRLID) are cytoplasmic. A helical transmembrane segment spans residues 70–90 (IFIINLAASDFIFLVTLPLWV). The Extracellular segment spans residues 91–120 (DKEASLGLWRTGSFLCKGSSYMISVNMHCS). Residues 121 to 141 (VLLLTCMSVDRYLAIVWPVVS) traverse the membrane as a helical segment. Over 142 to 149 (RKFRRTDC) the chain is Cytoplasmic. A helical transmembrane segment spans residues 150–170 (AYVVCASIWFISCLLGLPTLL). At 171–192 (SRELTLIDDKPYCAEKKATPIK) the chain is on the extracellular side. The helical transmembrane segment at 193 to 213 (LIWSLVALIFTFFVPLLSIVT) threads the bilayer. The Cytoplasmic portion of the chain corresponds to 214–239 (CYCCIARKLCAHYQQSGKHNKKLKKS). A helical membrane pass occupies residues 240 to 260 (IKIIFIVVAAFLVSWLPFNTF). The Extracellular portion of the chain corresponds to 261 to 284 (KFLAIVSGLRQEHYLPSAILQLGM). Residues 285–305 (EVSGPLAFANSCVNPFIYYIF) traverse the membrane as a helical segment. At 306–360 (DSYIRRAIVHCLCPCLKNYDFGSSTETSDSHLTKALSTFIHAEDFARRRKRSVSL) the chain is on the cytoplasmic side. Phosphoserine is present on Ser-359.

The protein belongs to the G-protein coupled receptor 1 family. Interacts with adapter YWHAE; this interaction promotes ER-to-Golgi transport of GPR15. Interacts with GNAI1; this interaction initiates the signaling pathway. Post-translationally, phosphorylation is necessary for YWHAE binding and efficient surface expression. In terms of processing, O-glycosylated. Sialylated O-glycans in the N-terminal tail inhibits binding of GPR15LG. Sulfation is required for efficient binding of GPR15LG. In terms of tissue distribution, highly expressed in lymphoid tissues, including macrophages and peripheral blood mononuclear cells.

It is found in the cell membrane. Its function is as follows. G protein-coupled receptor that plays an important role in immune homeostasis. Acts via its natural ligand GPR15LG, a chemokine-like polypeptide strongly expressed in gastrointestinal tissues. GPR15-GPR15LG signaling axis regulates intestinal homeostasis and inflammation through the migration of immune cells. Controls thereby the specific homing of T-cells, particularly FOXP3+ regulatory T-cells (Tregs), to the large intestine lamina propria. Also required for skin localization of thymus-derived dendritic epidermal T-cells. Plays an important role in mediating cytoprotective function as well as angiogenesis of thrombomodulin. Mechanistically, preferentially signals through the Gi/o pathway to inhibit adenylate cyclase activity and activate a phosphatidylinositol-calcium second messenger system that regulates the release of Ca(2+) ions from intracellular stores. (Microbial infection) Acts as an alternative coreceptor with CD4 for HIV-1 infection. In Homo sapiens (Human), this protein is G-protein coupled receptor 15 (GPR15).